A 98-amino-acid chain; its full sequence is Integration host factor subunit alpha (98 aa).

Residues 49 to 71 (FGNFDLRDKNQRPGRNPKTGEDI) form a disordered region.

Belongs to the bacterial histone-like protein family. In terms of assembly, heterodimer of an alpha and a beta chain.

In terms of biological role, this protein is one of the two subunits of integration host factor, a specific DNA-binding protein that functions in genetic recombination as well as in transcriptional and translational control. In Shewanella amazonensis (strain ATCC BAA-1098 / SB2B), this protein is Integration host factor subunit alpha.